The following is an 835-amino-acid chain: Serine/threonine-protein kinase TNNI3K (835 aa).

The N-myristoyl glycine moiety is linked to residue Gly-2. Positions 21–50 (SESYAIIIERLEDNLQIKENEFQELRHIFG) form a coiled coil. ANK repeat units follow at residues 66 to 96 (RGLS…RPSR), 100 to 129 (NGFP…DVQQ), 133 to 162 (GGLT…NVNV), 166 to 195 (VFFT…DVNV), 199 to 228 (VGDR…KADV), 234 to 263 (EDHV…EVQP), 269 to 298 (YGDT…TESL), 304 to 335 (FSET…NINH), 339 to 368 (DGHT…DMNL), and 381 to 410 (DEQT…PQEE). The 261-residue stretch at 463–723 (IEFHEIIGSG…EVVSKLEECL (261 aa)) folds into the Protein kinase domain. Residues 469-477 (IGSGSFGKV) and Lys-490 each bind ATP. The Proton acceptor role is filled by Asp-588.

The protein belongs to the protein kinase superfamily. TKL Ser/Thr protein kinase family. MAP kinase kinase kinase subfamily. Interacts with TNNI3, ACTC, ACTA1, MYBPC3, AIP, FABP3 and HADHB. It depends on Mg(2+) as a cofactor. In terms of processing, autophosphorylated.

It is found in the nucleus. It localises to the cytoplasm. It catalyses the reaction L-seryl-[protein] + ATP = O-phospho-L-seryl-[protein] + ADP + H(+). The catalysed reaction is L-threonyl-[protein] + ATP = O-phospho-L-threonyl-[protein] + ADP + H(+). In terms of biological role, may play a role in cardiac physiology. This Rattus norvegicus (Rat) protein is Serine/threonine-protein kinase TNNI3K.